The chain runs to 397 residues: Alpha-lytic protease (397 aa).

Positions 1-24 are cleaved as a signal peptide; it reads MYVSNHRSRRVARVSVSCLVAALA. A propeptide spanning residues 25–199 is cleaved from the precursor; it reads AMSCGAALAA…ESSPGKLQTT (175 aa). An intrachain disulfide couples C216 to C236. Catalysis depends on charge relay system residues H235 and D262. Intrachain disulfides connect C300/C310 and C336/C369. The Charge relay system role is filled by S342.

The protein belongs to the peptidase S1 family.

The enzyme catalyses Preferential cleavage: Ala-|-Xaa, Val-|-Xaa in bacterial cell walls, elastin and other proteins.. The chain is Alpha-lytic protease (alpha-LP) from Lysobacter enzymogenes.